The following is an 860-amino-acid chain: Nucleolar MIF4G domain-containing protein 1 (860 aa).

3 disordered regions span residues 1-172 (MAAS…AARK), 191-211 (RCLG…PLSF), and 226-339 (GKNS…EKYI). The tract at residues 1 to 269 (MAASRSAGEA…EEEEEGDVEK (269 aa)) is necessary for nucleolar localization and for targeting PPP1CA to the nucleolus. Basic residues predominate over residues 20-31 (VRMKRRGGRGPR). S57 bears the Phosphoserine mark. The span at 77 to 99 (GGRKSRKELRKEKRHLRKARRLQ) shows a compositional bias: basic residues. The span at 115–131 (GAEEASGHRQDTEERAR) shows a compositional bias: basic and acidic residues. S139 carries the post-translational modification Phosphoserine. Over residues 142–151 (RKPRPSRVKA) the composition is skewed to basic residues. The segment covering 152-169 (KATAATAKTRPSAAATAA) has biased composition (low complexity). 2 stretches are compositionally biased toward acidic residues: residues 249–267 (SDLE…EGDV) and 278–293 (AQSE…EQGE). The Required for efficient binding to PPP1CA and for targeting PPP1CA to the nucleolus motif lies at 307 to 310 (RVRF). The segment covering 312–325 (EDEEKSENSSEDGD) has biased composition (acidic residues). A phosphoserine mark is found at S317, S320, and S321. Residues 362 to 559 (KKHVKGLLNR…ETMLALKNND (198 aa)) enclose the MIF4G domain. An MI domain is found at 654 to 770 (DIRRNIFCTI…SLSILKVVEF (117 aa)).

The protein belongs to the CWC22 family. May interact with EIF4A1, EIF4A2 and EIF4A3. Interacts with PPP1CA and PPP1CC. As to expression, expressed in heart and skeletal muscle.

It localises to the nucleus. Its subcellular location is the nucleolus. Its function is as follows. Plays a role in targeting PPP1CA to the nucleolus. The polypeptide is Nucleolar MIF4G domain-containing protein 1 (NOM1) (Homo sapiens (Human)).